A 409-amino-acid chain; its full sequence is Serine/threonine transporter SstT (409 aa).

The next 9 membrane-spanning stretches (helical) occupy residues 17-37 (LVGQ…FFPA), 49-69 (FVSA…MASI), 83-103 (ILLL…IASF), 142-162 (ALIS…GIAF), 180-200 (VSLI…GLVA), 218-238 (LVVL…LIVF), 301-321 (GAAI…GIAV), 331-351 (VVAS…LLLI), and 357-377 (LFGI…IIAI).

Belongs to the dicarboxylate/amino acid:cation symporter (DAACS) (TC 2.A.23) family.

It is found in the cell inner membrane. The enzyme catalyses L-serine(in) + Na(+)(in) = L-serine(out) + Na(+)(out). It carries out the reaction L-threonine(in) + Na(+)(in) = L-threonine(out) + Na(+)(out). Involved in the import of serine and threonine into the cell, with the concomitant import of sodium (symport system). This chain is Serine/threonine transporter SstT, found in Pseudomonas aeruginosa (strain UCBPP-PA14).